Consider the following 1029-residue polypeptide: Carbamoyl phosphate synthase large chain (1029 aa).

Positions 1 to 402 (MPKRTDLQTI…SLQKALRSTE (402 aa)) are carboxyphosphate synthetic domain. The ATP site is built by Arg-129, Arg-169, Gly-175, Gly-176, Glu-208, Ile-210, Glu-215, Gly-241, Val-242, His-243, Gln-285, and Glu-299. The ATP-grasp 1 domain maps to 133–328 (QAAMKKIGVE…IAKIAALLAV (196 aa)). Positions 285, 299, and 301 each coordinate Mg(2+). Residues Gln-285, Glu-299, and Asn-301 each coordinate Mn(2+). The segment at 403–546 (SDVRGAFAEM…YSTYEWEDEV (144 aa)) is oligomerization domain. The carbamoyl phosphate synthetic domain stretch occupies residues 547 to 929 (TPTDKPKVVI…AYYRAELGAK (383 aa)). Positions 671–863 (NALCERLGLP…LAKYAARIAV (193 aa)) constitute an ATP-grasp 2 domain. ATP contacts are provided by Arg-707, Gln-747, Leu-749, Glu-754, Gly-779, Val-780, His-781, Ser-782, Gln-822, and Glu-834. Positions 822, 834, and 836 each coordinate Mg(2+). Residues Gln-822, Glu-834, and Asn-836 each coordinate Mn(2+). Residues 930–1028 (SNLPLSGTAL…QAWQQREAAA (99 aa)) form the MGS-like domain. The interval 930–1029 (SNLPLSGTAL…AWQQREAAAS (100 aa)) is allosteric domain.

The protein belongs to the CarB family. In terms of assembly, composed of two chains; the small (or glutamine) chain promotes the hydrolysis of glutamine to ammonia, which is used by the large (or ammonia) chain to synthesize carbamoyl phosphate. Tetramer of heterodimers (alpha,beta)4. Requires Mg(2+) as cofactor. Mn(2+) serves as cofactor.

The catalysed reaction is hydrogencarbonate + L-glutamine + 2 ATP + H2O = carbamoyl phosphate + L-glutamate + 2 ADP + phosphate + 2 H(+). It catalyses the reaction hydrogencarbonate + NH4(+) + 2 ATP = carbamoyl phosphate + 2 ADP + phosphate + 2 H(+). It participates in amino-acid biosynthesis; L-arginine biosynthesis; carbamoyl phosphate from bicarbonate: step 1/1. Its pathway is pyrimidine metabolism; UMP biosynthesis via de novo pathway; (S)-dihydroorotate from bicarbonate: step 1/3. Large subunit of the glutamine-dependent carbamoyl phosphate synthetase (CPSase). CPSase catalyzes the formation of carbamoyl phosphate from the ammonia moiety of glutamine, carbonate, and phosphate donated by ATP, constituting the first step of 2 biosynthetic pathways, one leading to arginine and/or urea and the other to pyrimidine nucleotides. The large subunit (synthetase) binds the substrates ammonia (free or transferred from glutamine from the small subunit), hydrogencarbonate and ATP and carries out an ATP-coupled ligase reaction, activating hydrogencarbonate by forming carboxy phosphate which reacts with ammonia to form carbamoyl phosphate. The protein is Carbamoyl phosphate synthase large chain of Deinococcus geothermalis (strain DSM 11300 / CIP 105573 / AG-3a).